Consider the following 986-residue polypeptide: LRR receptor-like serine/threonine-protein kinase ER2 (986 aa).

Residues 1–21 (MTTTTTTRLLLAAILLAVAAA) form the signal peptide. Over 22-581 (DDDGQTLLEI…VQRSSVSRSA (560 aa)) the chain is Extracellular. N-linked (GlcNAc...) asparagine glycosylation is found at Asn-64 and Asn-73. LRR repeat units lie at residues 68–89 (AVAALNLSGLNLGGEISPAIGN), 90–114 (LKSVESIDLKSNELSGQIPDEIGDC), 116–138 (SLKTLDLSSNNLGGDIPFSISKL), 139–161 (KHLENLILKNNQLVGMIPSTLSQ), 162–186 (LPNLKILDLAQNKLNGEIPRLIYWN), 188–210 (VLQYLGLRSNNLEGSLSPEMCQL), 211–233 (TGLWYFDVKNNSLTGIIPDTIGN), 234–259 (CTSFQVLDLSYNRLTGEIPFNIGFLQ), 261–280 (ATLSLQGNNFSGPIPSVIGL), 281–304 (MQALAVLDLSFNQLSGPIPSILGN), 306–329 (TYTEKLYLQGNRLTGSIPPELGNM), 330–352 (STLHYLELNDNQLTGFIPPELGK), 354–377 (TGLFDLNLANNNLEGPIPDNISSC), 379–401 (NLISFNAYGNKLNGTVPRSLHKL), 402–425 (ESITYLNLSSNYLSGAIPIELAKM), 427–449 (NLDTLDLSCNMVAGPIPSAIGSL), 450–472 (EHLLRLNFSNNNLVGYIPAEFGN), 473–498 (LRSIMEIDLSSNHLGGLIPQEVGMLQ), 500–520 (LILLKLESNNITGDVSSLINC), and 521–545 (FSLNVLNVSYNNLAGIVPTDNNFSR). 2 N-linked (GlcNAc...) asparagine glycosylation sites follow: Asn-220 and Asn-233. Asn-269, Asn-304, and Asn-328 each carry an N-linked (GlcNAc...) asparagine glycan. Residues Asn-373, Asn-391, and Asn-408 are each glycosylated (N-linked (GlcNAc...) asparagine). N-linked (GlcNAc...) asparagine glycosylation is present at Asn-456. 3 N-linked (GlcNAc...) asparagine glycosylation sites follow: Asn-509, Asn-527, and Asn-542. A helical transmembrane segment spans residues 582–602 (ILGIAVAGLVILLMILAAACW). Over 603–986 (PHWAQVPKDV…FGEVISQNTE (384 aa)) the chain is Cytoplasmic. A Protein kinase domain is found at 653 to 934 (LSEKYIIGYG…YPDPPSKPAL (282 aa)). Residues 659–667 (IGYGASSTV) and Lys-681 each bind ATP. Catalysis depends on Asp-779, which acts as the Proton acceptor.

The protein belongs to the protein kinase superfamily. Ser/Thr protein kinase family.

Its subcellular location is the cell membrane. It carries out the reaction L-seryl-[protein] + ATP = O-phospho-L-seryl-[protein] + ADP + H(+). The enzyme catalyses L-threonyl-[protein] + ATP = O-phospho-L-threonyl-[protein] + ADP + H(+). Its function is as follows. Receptor kinase that may be involved in the regulation of cell proliferation and cell growth. The sequence is that of LRR receptor-like serine/threonine-protein kinase ER2 from Oryza sativa subsp. japonica (Rice).